We begin with the raw amino-acid sequence, 160 residues long: Cytochrome b6-f complex subunit 4 (160 aa).

3 consecutive transmembrane segments (helical) span residues leucine 36–valine 56, leucine 95–glutamate 115, and alanine 131–isoleucine 151.

It belongs to the cytochrome b family. PetD subfamily. In terms of assembly, the 4 large subunits of the cytochrome b6-f complex are cytochrome b6, subunit IV (17 kDa polypeptide, PetD), cytochrome f and the Rieske protein, while the 4 small subunits are PetG, PetL, PetM and PetN. The complex functions as a dimer.

It is found in the cellular thylakoid membrane. In terms of biological role, component of the cytochrome b6-f complex, which mediates electron transfer between photosystem II (PSII) and photosystem I (PSI), cyclic electron flow around PSI, and state transitions. The sequence is that of Cytochrome b6-f complex subunit 4 from Trichodesmium erythraeum (strain IMS101).